Reading from the N-terminus, the 343-residue chain is S-adenosylmethionine:tRNA ribosyltransferase-isomerase (343 aa).

This sequence belongs to the QueA family. In terms of assembly, monomer.

The protein localises to the cytoplasm. It carries out the reaction 7-aminomethyl-7-carbaguanosine(34) in tRNA + S-adenosyl-L-methionine = epoxyqueuosine(34) in tRNA + adenine + L-methionine + 2 H(+). It functions in the pathway tRNA modification; tRNA-queuosine biosynthesis. In terms of biological role, transfers and isomerizes the ribose moiety from AdoMet to the 7-aminomethyl group of 7-deazaguanine (preQ1-tRNA) to give epoxyqueuosine (oQ-tRNA). The chain is S-adenosylmethionine:tRNA ribosyltransferase-isomerase from Pelobacter propionicus (strain DSM 2379 / NBRC 103807 / OttBd1).